We begin with the raw amino-acid sequence, 107 residues long: DNA-directed RNA polymerase subunit omega (107 aa).

The protein belongs to the RNA polymerase subunit omega family. As to quaternary structure, the RNAP catalytic core consists of 2 alpha, 1 beta, 1 beta' and 1 omega subunit. When a sigma factor is associated with the core the holoenzyme is formed, which can initiate transcription.

It catalyses the reaction RNA(n) + a ribonucleoside 5'-triphosphate = RNA(n+1) + diphosphate. In terms of biological role, promotes RNA polymerase assembly. Latches the N- and C-terminal regions of the beta' subunit thereby facilitating its interaction with the beta and alpha subunits. The polypeptide is DNA-directed RNA polymerase subunit omega (Mycolicibacterium smegmatis (strain ATCC 700084 / mc(2)155) (Mycobacterium smegmatis)).